We begin with the raw amino-acid sequence, 215 residues long: Calcium-binding protein 7 (215 aa).

Residues Met-1–Ser-188 are Cytoplasmic-facing. EF-hand domains lie at Asp-33–Met-68 and Pro-69–Thr-104. Ca(2+) is bound by residues Asp-46, Asp-48, Asn-50, Glu-57, Asp-82, Asp-84, Asp-86, Gln-88, and Glu-93. The helical; Anchor for type IV membrane protein transmembrane segment at Leu-189 to Val-209 threads the bilayer. Over Leu-210–Lys-215 the chain is Extracellular.

In terms of assembly, interacts with PI4KB. This binding competes with FREQ/NCS1 binding in a calcium-dependent manner.

The protein resides in the golgi apparatus. The protein localises to the trans-Golgi network membrane. It localises to the cytoplasm. It is found in the perinuclear region. Its subcellular location is the cell membrane. Negatively regulates Golgi-to-plasma membrane trafficking by interacting with PI4KB and inhibiting its activity. The protein is Calcium-binding protein 7 (CABP7) of Homo sapiens (Human).